We begin with the raw amino-acid sequence, 190 residues long: Glutathione peroxidase 2 (190 aa).

Residue U40 is part of the active site. U40 is a non-standard amino acid (selenocysteine).

It belongs to the glutathione peroxidase family. Homotetramer. As to expression, mostly in liver and gastrointestinal tract, not found in heart or kidney.

It is found in the cytoplasm. It localises to the cytosol. It carries out the reaction 2 glutathione + H2O2 = glutathione disulfide + 2 H2O. The enzyme catalyses a hydroperoxy polyunsaturated fatty acid + 2 glutathione = a hydroxy polyunsaturated fatty acid + glutathione disulfide + H2O. It catalyses the reaction tert-butyl hydroperoxide + 2 glutathione = tert-butanol + glutathione disulfide + H2O. The catalysed reaction is cumene hydroperoxide + 2 glutathione = 2-phenylpropan-2-ol + glutathione disulfide + H2O. It carries out the reaction (13S)-hydroperoxy-(9Z,11E)-octadecadienoate + 2 glutathione = (13S)-hydroxy-(9Z,11E)-octadecadienoate + glutathione disulfide + H2O. The enzyme catalyses (5S)-hydroperoxy-(6E,8Z,11Z,14Z)-eicosatetraenoate + 2 glutathione = (5S)-hydroxy-(6E,8Z,11Z,14Z)-eicosatetraenoate + glutathione disulfide + H2O. It catalyses the reaction (12R)-hydroperoxy-(5Z,8Z,10E,14Z)-eicosatetraenoate + 2 glutathione = (12R)-hydroxy-(5Z,8Z,10E,14Z)-eicosatetraenoate + glutathione disulfide + H2O. The catalysed reaction is (15S)-hydroperoxy-(5Z,8Z,11Z,13E)-eicosatetraenoate + 2 glutathione = (15S)-hydroxy-(5Z,8Z,11Z,13E)-eicosatetraenoate + glutathione disulfide + H2O. In terms of biological role, catalyzes the reduction of hydroperoxides in a glutathione-dependent manner thus regulating cellular redox homeostasis. Can reduce small soluble hydroperoxides such as H2O2, cumene hydroperoxide and tert-butyl hydroperoxide, as well as several fatty acid-derived hydroperoxides. Cannot reduce phosphatidycholine hydroperoxide. The sequence is that of Glutathione peroxidase 2 from Homo sapiens (Human).